Here is a 256-residue protein sequence, read N- to C-terminus: MVKIGLYGASGKMAQSIISCLKDEKDATLSVAFSQKNEVENLSSELLTNDFAKFFEACDVIIDFSQKEATVALLNYARTNPKPLVIGTTGLNDDEKNLLHLASGTMPILYATNMSLGVAVLNRIARIASKVLREFDIEIVEQHHRHKKDAPSGTAMTLAGCVAEARDLNLKDVLVTGRAGMVGARSKDEIAVMALRGGDVVGRHTVGFYNDGEFIELNHTATSRATFSKGAIKAAIWLKDQSSGLYSIDDSLGLDD.

Position 8–13 (8–13) interacts with NAD(+); the sequence is GASGKM. Lys36 contributes to the NADP(+) binding site. NAD(+) contacts are provided by residues 87–89 and 111–114; these read GTT and ATNM. The active-site Proton donor/acceptor is the His143. Residue His144 participates in (S)-2,3,4,5-tetrahydrodipicolinate binding. The Proton donor role is filled by Lys147. A (S)-2,3,4,5-tetrahydrodipicolinate-binding site is contributed by 153 to 154; sequence GT.

It belongs to the DapB family.

Its subcellular location is the cytoplasm. It carries out the reaction (S)-2,3,4,5-tetrahydrodipicolinate + NAD(+) + H2O = (2S,4S)-4-hydroxy-2,3,4,5-tetrahydrodipicolinate + NADH + H(+). The enzyme catalyses (S)-2,3,4,5-tetrahydrodipicolinate + NADP(+) + H2O = (2S,4S)-4-hydroxy-2,3,4,5-tetrahydrodipicolinate + NADPH + H(+). It participates in amino-acid biosynthesis; L-lysine biosynthesis via DAP pathway; (S)-tetrahydrodipicolinate from L-aspartate: step 4/4. In terms of biological role, catalyzes the conversion of 4-hydroxy-tetrahydrodipicolinate (HTPA) to tetrahydrodipicolinate. This Campylobacter concisus (strain 13826) protein is 4-hydroxy-tetrahydrodipicolinate reductase.